Consider the following 331-residue polypeptide: Biotin synthase (331 aa).

Residues 53 to 272 (NHVETASLLS…LATARVMMPR (220 aa)) form the Radical SAM core domain. [4Fe-4S] cluster is bound by residues cysteine 68, cysteine 72, and cysteine 75. Residues cysteine 112, cysteine 143, cysteine 203, and arginine 276 each contribute to the [2Fe-2S] cluster site.

It belongs to the radical SAM superfamily. Biotin synthase family. As to quaternary structure, homodimer. [4Fe-4S] cluster serves as cofactor. [2Fe-2S] cluster is required as a cofactor.

It carries out the reaction (4R,5S)-dethiobiotin + (sulfur carrier)-SH + 2 reduced [2Fe-2S]-[ferredoxin] + 2 S-adenosyl-L-methionine = (sulfur carrier)-H + biotin + 2 5'-deoxyadenosine + 2 L-methionine + 2 oxidized [2Fe-2S]-[ferredoxin]. Its pathway is cofactor biosynthesis; biotin biosynthesis; biotin from 7,8-diaminononanoate: step 2/2. Its function is as follows. Catalyzes the conversion of dethiobiotin (DTB) to biotin by the insertion of a sulfur atom into dethiobiotin via a radical-based mechanism. This is Biotin synthase from Bradyrhizobium diazoefficiens (strain JCM 10833 / BCRC 13528 / IAM 13628 / NBRC 14792 / USDA 110).